The chain runs to 872 residues: Oxidation resistance protein 1 (872 aa).

Positions 1 to 86 (MSVTNLSWLK…QKKTLDKKDG (86 aa)) are disordered. Over residues 63–86 (RRSELKRFYTIDTGQKKTLDKKDG) the composition is skewed to basic and acidic residues. S90 carries the phosphoserine modification. Residues 98–141 (VKYTVESRDSLNSIALKFDTTPNELVQLNKLFSRAVVTGQVLYV) form the LysM domain. T118 bears the Phosphothreonine mark. Low complexity predominate over residues 150–168 (VESSPSLSPISPLSPTSSE). The interval 150-187 (VESSPSLSPISPLSPTSSEAELEKTTTPDVVHPKEPTP) is disordered. Positions 170-184 (ELEKTTTPDVVHPKE) are enriched in basic and acidic residues. 3 positions are modified to phosphoserine: S201, S202, and S204. The GRAM domain occupies 212–268 (EKFLKINCRYITSSKGTVSGVLLVTPNNIMFDPHKTDPLVQENGCEEYGIMCPMEEV). A phosphoserine mark is found at S294, S334, and S336. The disordered stretch occupies residues 314–338 (SRIRDAANDSASTAPRSTEESLSED). The residue at position 341 (T341) is a Phosphothreonine. A phosphoserine mark is found at S346 and S496. Residues 549–576 (RRHRLHKFLCLRVRKPMRKTFVSQASAT) are mediates oxidative antimutator activity. Residues 711–872 (HLLLPDQIIK…IQDIEIWAFK (162 aa)) form the TLDc domain.

The protein belongs to the OXR1 family.

Its subcellular location is the mitochondrion. In terms of biological role, may be involved in protection from oxidative damage. This chain is Oxidation resistance protein 1 (OXR1), found in Bos taurus (Bovine).